The primary structure comprises 631 residues: FAST kinase domain-containing protein 4 (631 aa).

Residues 1–107 (MAAHLVKRCT…NQAAMVLIRL (107 aa)) constitute a mitochondrion transit peptide. Residue S553 is modified to Phosphoserine. Residues 561–619 (LAFLRWEFPNFNSRSKDLLGRFVLARRHIVAAGFLIVDVPFYEWLELKSEWQKGAYLKD) enclose the RAP domain.

Belongs to the FAST kinase family. As to expression, ubiquitously expressed. Expression detected in spleen, thymus, testis, ovary, colon, heart, smooth muscle, kidney, brain, lung, liver and white adipose tissue with highest expression in smooth muscle.

It is found in the mitochondrion matrix. In terms of biological role, plays a role in processing of mitochondrial RNA precursors and in stabilization of a subset of mature mitochondrial RNA species, such as MT-CO1, MT-CO2, MT-CYB, MT-CO3, MT-ND3, MT-ND5 and MT-ATP8/6. May play a role in cell cycle progression. The sequence is that of FAST kinase domain-containing protein 4 from Homo sapiens (Human).